Reading from the N-terminus, the 153-residue chain is Arachidonate 5-lipoxygenase-activating protein (153 aa).

Topologically, residues 1 to 8 are lumenal; sequence MDQETVGN. The helical transmembrane segment at 9-30 threads the bilayer; sequence VVLLAIVTLISVIQNGFFAHKV. The Cytoplasmic portion of the chain corresponds to 31-52; that stretch reads EHESKTQNGRSFQRTGTLAFER. The helical transmembrane segment at 53-77 threads the bilayer; the sequence is VYTANQNCVDAYPTFLVMLWSAGLL. Residues 78–80 are Lumenal-facing; sequence CSQ. Residues 81-102 traverse the membrane as a helical segment; that stretch reads VPAAFAGLMYLFVRQKYFVGYL. The Cytoplasmic segment spans residues 103–107; the sequence is GERRQ. Residues 108–115 lie within the membrane without spanning it; sequence STPGYIFG. Residues 116 to 128 traverse the membrane as a helical segment; that stretch reads KRIILFLFLMSLA. Residues 129-153 are Lumenal-facing; that stretch reads GIFNYYLILFFGSDFENYIKTITTT.

It belongs to the MAPEG family. As to quaternary structure, homotrimer. Interacts with LTC4S and ALOX5.

The protein localises to the nucleus membrane. It is found in the endoplasmic reticulum membrane. In terms of biological role, required for leukotriene biosynthesis by ALOX5 (5-lipoxygenase). Anchors ALOX5 to the membrane. Binds arachidonic acid, and could play an essential role in the transfer of arachidonic acid to ALOX5. Binds to MK-886, a compound that blocks the biosynthesis of leukotrienes. This is Arachidonate 5-lipoxygenase-activating protein (ALOX5AP) from Equus caballus (Horse).